Consider the following 308-residue polypeptide: tRNA dimethylallyltransferase (308 aa).

14 to 21 lines the ATP pocket; sequence GPTASGKT. A substrate-binding site is contributed by 16 to 21; the sequence is TASGKT. Interaction with substrate tRNA stretches follow at residues 39 to 42, 163 to 167, and 244 to 249; these read DSAL, QRLSR, and RCVGYR.

Belongs to the IPP transferase family. In terms of assembly, monomer. It depends on Mg(2+) as a cofactor.

It carries out the reaction adenosine(37) in tRNA + dimethylallyl diphosphate = N(6)-dimethylallyladenosine(37) in tRNA + diphosphate. Functionally, catalyzes the transfer of a dimethylallyl group onto the adenine at position 37 in tRNAs that read codons beginning with uridine, leading to the formation of N6-(dimethylallyl)adenosine (i(6)A). This is tRNA dimethylallyltransferase from Shewanella loihica (strain ATCC BAA-1088 / PV-4).